The following is a 160-amino-acid chain: Cytochrome b6-f complex subunit 4 (160 aa).

Transmembrane regions (helical) follow at residues 36-56, 95-115, and 131-151; these read LLYI…GLAV, LLGV…PFLE, and TVFL…ALPI.

This sequence belongs to the cytochrome b family. PetD subfamily. In terms of assembly, the 4 large subunits of the cytochrome b6-f complex are cytochrome b6, subunit IV (17 kDa polypeptide, petD), cytochrome f and the Rieske protein, while the 4 small subunits are petG, petL, petM and petN. The complex functions as a dimer.

The protein localises to the plastid. It is found in the chloroplast thylakoid membrane. Component of the cytochrome b6-f complex, which mediates electron transfer between photosystem II (PSII) and photosystem I (PSI), cyclic electron flow around PSI, and state transitions. This is Cytochrome b6-f complex subunit 4 from Spirogyra maxima (Green alga).